The following is a 574-amino-acid chain: Developmental and secondary metabolism regulator veA (574 aa).

Disordered regions lie at residues 1-22 (MATR…SRIT), 39-60 (ERAR…VDPP), 255-500 (RSSD…GAGK), and 513-540 (RSYE…YPRR). One can recognise a Velvet domain in the interval 25-230 (GKKLTYKLNV…AEQGCRVRIR (206 aa)). A Nuclear localization signal motif is present at residues 39-44 (ERARAC). 2 stretches are compositionally biased toward pro residues: residues 314–323 (RPLPPAPGPA) and 330–341 (PAPPAPPAPPSH). Polar residues-rich tracts occupy residues 343–353 (PGYQSHLSFGS), 385–394 (HARNPSTSAE), 406–415 (RMSTERSSYP), and 448–458 (VAQSAAPRSQT). The tract at residues 457–501 (QTPSSSLVPSLPPLKALSGDYPNNLSQSSSSTSQSPSHDLGAGKK) is PEST. 2 stretches are compositionally biased toward low complexity: residues 459–474 (PSSS…KALS) and 482–493 (SQSSSSTSQSPS). Residues 513–525 (RSYEDSFGHDDRP) show a composition bias toward basic and acidic residues.

Belongs to the velvet family. VeA subfamily. Component of the heterotrimeric velvet complex composed of laeA, veA and velB; VeA acting as a bridging protein between laeA and velB.

Its subcellular location is the nucleus. The protein localises to the cytoplasm. Component of the velvet transcription factor complex that controls sexual/asexual developmental ratio in response to light, promoting sexual development in the darkness while stimulating asexual sporulation under illumination. The velvet complex hat acts as a global regulator for secondary metabolite gene expression. Controls the expression of the penicillin gene cluster. This is Developmental and secondary metabolism regulator veA from Aspergillus oryzae (strain ATCC 42149 / RIB 40) (Yellow koji mold).